A 451-amino-acid chain; its full sequence is tRNA(Ile)-lysidine synthase (451 aa).

Serine 21–serine 26 provides a ligand contact to ATP.

This sequence belongs to the tRNA(Ile)-lysidine synthase family.

The protein resides in the cytoplasm. The enzyme catalyses cytidine(34) in tRNA(Ile2) + L-lysine + ATP = lysidine(34) in tRNA(Ile2) + AMP + diphosphate + H(+). Ligates lysine onto the cytidine present at position 34 of the AUA codon-specific tRNA(Ile) that contains the anticodon CAU, in an ATP-dependent manner. Cytidine is converted to lysidine, thus changing the amino acid specificity of the tRNA from methionine to isoleucine. The polypeptide is tRNA(Ile)-lysidine synthase (Yersinia pseudotuberculosis serotype O:1b (strain IP 31758)).